A 323-amino-acid chain; its full sequence is uncharacterized protein (323 aa).

Helical transmembrane passes span leucine 232–leucine 252 and serine 267–glycine 287.

The protein belongs to the glycosyltransferase 2 family. GtrB subfamily.

It localises to the cell membrane. This is an uncharacterized protein from Bacillus subtilis (strain 168).